Reading from the N-terminus, the 318-residue chain is NADH-ubiquinone oxidoreductase chain 1 (318 aa).

The next 8 helical transmembrane spans lie at 3–23 (LITLLSTIVPILLAVAFLTLV), 70–90 (MFIIAPILALALALTMWTPLP), 100–120 (LGILFMLAMSSLAVYAILWSG), 146–166 (LAIILLSILLMSGSYSLTTLI), 171–191 (YIWLILPSWPLTMMWFISTLA), 222–242 (LFFLAEYANIIMMNALTTILF), 254–273 (LYTTNFATKTLLLTMSFLWI), and 294–314 (LPLTLALCMWYVTMPIMLASI).

Belongs to the complex I subunit 1 family.

The protein localises to the mitochondrion inner membrane. The catalysed reaction is a ubiquinone + NADH + 5 H(+)(in) = a ubiquinol + NAD(+) + 4 H(+)(out). Core subunit of the mitochondrial membrane respiratory chain NADH dehydrogenase (Complex I) that is believed to belong to the minimal assembly required for catalysis. Complex I functions in the transfer of electrons from NADH to the respiratory chain. The immediate electron acceptor for the enzyme is believed to be ubiquinone. The protein is NADH-ubiquinone oxidoreductase chain 1 (MT-ND1) of Phyllostomus elongatus (Lesser spear-nosed bat).